The chain runs to 331 residues: Glucokinase (331 aa).

Residue 16–21 (GDIGGT) participates in ATP binding.

It belongs to the bacterial glucokinase family.

It localises to the cytoplasm. It catalyses the reaction D-glucose + ATP = D-glucose 6-phosphate + ADP + H(+). The polypeptide is Glucokinase (Pseudomonas aeruginosa (strain UCBPP-PA14)).